Consider the following 166-residue polypeptide: Lipoprotein signal peptidase (166 aa).

A run of 3 helical transmembrane segments spans residues 12–32, 70–90, and 102–122; these read WLWV…LILQ, WFFS…MYRS, and ALII…GFVV. Catalysis depends on residues D123 and D141. Residues 137 to 157 traverse the membrane as a helical segment; the sequence is FNLADSAICIGAALIVLEGFL.

It belongs to the peptidase A8 family.

Its subcellular location is the cell inner membrane. It catalyses the reaction Release of signal peptides from bacterial membrane prolipoproteins. Hydrolyzes -Xaa-Yaa-Zaa-|-(S,diacylglyceryl)Cys-, in which Xaa is hydrophobic (preferably Leu), and Yaa (Ala or Ser) and Zaa (Gly or Ala) have small, neutral side chains.. It participates in protein modification; lipoprotein biosynthesis (signal peptide cleavage). This protein specifically catalyzes the removal of signal peptides from prolipoproteins. The protein is Lipoprotein signal peptidase of Klebsiella pneumoniae (strain 342).